Here is a 409-residue protein sequence, read N- to C-terminus: Lissencephaly-1 homolog (409 aa).

Positions 7–39 (QEEELRFAVADYLQSCGYTNALEAFKKDASIPK) constitute a LisH domain. Positions 56 to 81 (SVVRLQKKVMDLELRLNNTTREMNSG) form a coiled coil. Residues 75–92 (TREMNSGVPTRNSRSSND) are compositionally biased toward polar residues. Positions 75–105 (TREMNSGVPTRNSRSSNDWIPRPPEKHSLSG) are disordered. WD repeat units lie at residues 105–146 (GHRS…RTLR), 147–186 (GHTD…CRMT), 189–228 (GHDH…CVYN), 231–270 (GHRE…CKEE), 273–332 (GHEH…CLFS), 335–374 (GHDN…CSKS), and 377–409 (AHNH…WECR).

It belongs to the WD repeat LIS1/nudF family.

It localises to the cytoplasm. The protein localises to the cytoskeleton. Its subcellular location is the microtubule organizing center. The protein resides in the centrosome. In terms of biological role, positively regulates the activity of the minus-end directed microtubule motor protein dynein. May enhance dynein-mediated microtubule sliding by targeting dynein to the microtubule plus end. Required for several dynein- and microtubule-dependent processes. This is Lissencephaly-1 homolog from Trichoplax adhaerens (Trichoplax reptans).